Here is a 231-residue protein sequence, read N- to C-terminus: Urease accessory protein UreF (231 aa).

This sequence belongs to the UreF family. As to quaternary structure, ureD, UreF and UreG form a complex that acts as a GTP-hydrolysis-dependent molecular chaperone, activating the urease apoprotein by helping to assemble the nickel containing metallocenter of UreC. The UreE protein probably delivers the nickel.

The protein localises to the cytoplasm. Functionally, required for maturation of urease via the functional incorporation of the urease nickel metallocenter. This chain is Urease accessory protein UreF, found in Magnetococcus marinus (strain ATCC BAA-1437 / JCM 17883 / MC-1).